A 245-amino-acid chain; its full sequence is 7-cyano-7-deazaguanine synthase (245 aa).

ATP is bound at residue 19-29 (FSGGQDSATCL). Zn(2+) is bound by residues Cys207, Cys222, Cys225, and Cys228.

It belongs to the QueC family. Zn(2+) serves as cofactor.

The enzyme catalyses 7-carboxy-7-deazaguanine + NH4(+) + ATP = 7-cyano-7-deazaguanine + ADP + phosphate + H2O + H(+). Its pathway is purine metabolism; 7-cyano-7-deazaguanine biosynthesis. Functionally, catalyzes the ATP-dependent conversion of 7-carboxy-7-deazaguanine (CDG) to 7-cyano-7-deazaguanine (preQ(0)). The protein is 7-cyano-7-deazaguanine synthase of Gluconacetobacter diazotrophicus (strain ATCC 49037 / DSM 5601 / CCUG 37298 / CIP 103539 / LMG 7603 / PAl5).